A 210-amino-acid polypeptide reads, in one-letter code: 3 beta-hydroxysteroid dehydrogenase/Delta 5--&gt;4-isomerase (210 aa).

The active-site Proton acceptor is the Tyr-29. Lys-33 contacts NAD(+).

The protein belongs to the 3-beta-HSD family.

The enzyme catalyses a 3beta-hydroxy-Delta(5)-steroid + NAD(+) = a 3-oxo-Delta(5)-steroid + NADH + H(+). The catalysed reaction is a 3-oxo-Delta(5)-steroid = a 3-oxo-Delta(4)-steroid. Its pathway is lipid metabolism; steroid biosynthesis. In terms of biological role, catalyzes the oxidative conversion of Delta(5)-ene-3-beta-hydroxy steroid, and the oxidative conversion of ketosteroids. The 3-beta-HSD enzymatic system plays a crucial role in the biosynthesis of all classes of hormonal steroids. During viral infection, steroid production contributes to virulence by inhibiting the host inflammatory response. The chain is 3 beta-hydroxysteroid dehydrogenase/Delta 5--&gt;4-isomerase (OPG174) from Variola virus (isolate Human/India/Ind3/1967) (VARV).